Consider the following 656-residue polypeptide: UvrABC system protein B (656 aa).

One can recognise a Helicase ATP-binding domain in the interval glutamine 24–arginine 409. Glycine 37–threonine 44 lines the ATP pocket. A Beta-hairpin motif is present at residues tyrosine 90–isoleucine 113. The Helicase C-terminal domain maps to glutamine 426–isoleucine 589. Residues glutamate 616–glutamine 651 enclose the UVR domain.

It belongs to the UvrB family. In terms of assembly, forms a heterotetramer with UvrA during the search for lesions. Interacts with UvrC in an incision complex.

It localises to the cytoplasm. In terms of biological role, the UvrABC repair system catalyzes the recognition and processing of DNA lesions. A damage recognition complex composed of 2 UvrA and 2 UvrB subunits scans DNA for abnormalities. Upon binding of the UvrA(2)B(2) complex to a putative damaged site, the DNA wraps around one UvrB monomer. DNA wrap is dependent on ATP binding by UvrB and probably causes local melting of the DNA helix, facilitating insertion of UvrB beta-hairpin between the DNA strands. Then UvrB probes one DNA strand for the presence of a lesion. If a lesion is found the UvrA subunits dissociate and the UvrB-DNA preincision complex is formed. This complex is subsequently bound by UvrC and the second UvrB is released. If no lesion is found, the DNA wraps around the other UvrB subunit that will check the other stand for damage. The polypeptide is UvrABC system protein B (Chlamydia abortus (strain DSM 27085 / S26/3) (Chlamydophila abortus)).